Reading from the N-terminus, the 452-residue chain is 23S rRNA (uracil(1939)-C(5))-methyltransferase RlmD (452 aa).

The region spanning 1-57 (METEVNVAEISALDYEGRGVTKVGGKTVFIKGALPSERVGFRIVRQKKQFDEAEAVA) is the TRAM domain. Positions 70, 76, 79, and 157 each coordinate [4Fe-4S] cluster. S-adenosyl-L-methionine contacts are provided by Q269, F298, N303, E319, N347, and D368. Residue C395 is the Nucleophile of the active site.

This sequence belongs to the class I-like SAM-binding methyltransferase superfamily. RNA M5U methyltransferase family. RlmD subfamily.

It carries out the reaction uridine(1939) in 23S rRNA + S-adenosyl-L-methionine = 5-methyluridine(1939) in 23S rRNA + S-adenosyl-L-homocysteine + H(+). Functionally, catalyzes the formation of 5-methyl-uridine at position 1939 (m5U1939) in 23S rRNA. The chain is 23S rRNA (uracil(1939)-C(5))-methyltransferase RlmD from Neisseria lactamica (strain 020-06).